The chain runs to 172 residues: Protein nemuri (172 aa).

An N-terminal signal peptide occupies residues 1-25; it reads MSAKYTLIFALAALCCLVFSTEAAA. The interval 27–172 is disordered; sequence RSRVLSSRRG…KRRSGKGNKA (146 aa). Basic and acidic residues-rich tracts occupy residues 35–50, 58–90, and 97–108; these read RGSELVEKTSDNKEDS, DLERQEQEEQNDRLEGRSDDVAEGSDNKEDKET, and TIVKPNKDDARA. Residues 45-74 adopt a coiled-coil conformation; the sequence is DNKEDSELAAQEQDLERQEQEEQNDRLEGR. The segment covering 109–172 has biased composition (basic residues); the sequence is RRIVRAGRRR…KRRSGKGNKA (64 aa).

In terms of tissue distribution, detected in the brain where it accumulates in the dorsal fan-shaped body following sleep deprivation (at protein level). Expressed in the adult body.

The protein resides in the secreted. Functionally, antimicrobial protein which is essential for the homeostatic regulation of sleep. Promotes sleep following sleep deprivation or bacterial infection and increases survival following bacterial infection. Likely to promote survival to bacterial infection in two ways; by contributing to the innate immune response and by promoting sleep during sickness to aid recovery. The chain is Protein nemuri from Drosophila melanogaster (Fruit fly).